Here is a 419-residue protein sequence, read N- to C-terminus: L-rhamnose isomerase (419 aa).

His-262, Asp-294, and Asp-296 together coordinate Mn(2+).

Belongs to the rhamnose isomerase family. Homotetramer. It depends on Mn(2+) as a cofactor.

The protein resides in the cytoplasm. It carries out the reaction L-rhamnopyranose = L-rhamnulose. Its pathway is carbohydrate degradation; L-rhamnose degradation; glycerone phosphate from L-rhamnose: step 1/3. Catalyzes the interconversion of L-rhamnose and L-rhamnulose. This Salmonella typhi protein is L-rhamnose isomerase.